The chain runs to 1153 residues: AP-3 complex subunit delta-1 (1153 aa).

A2 carries the post-translational modification N-acetylalanine. 11 HEAT repeats span residues 34-71 (KYIS…LGYD), 77-114 (FNII…LTTN), 142-179 (DLAR…KYPE), 180-216 (SLRP…RNPK), 254-292 (RLGK…SLSS), 299-336 (ASIQ…THPK), 338-373 (VQSH…KKNL), 375-409 (EIVK…QSNY), 431-468 (TRHG…SAHL), 497-535 (QEPH…SILQ), and 548-585 (AVTQ…IQKL). Disordered regions lie at residues 629 to 696 (EPLS…YQDT) and 726 to 920 (KLEE…PPES). S632, S634, S636, and S658 each carry phosphoserine. A compositionally biased stretch (basic and acidic residues) spans 639–675 (ERPRAVFHEEEQRRPKHRPSEADEEELARRREARKQE). Positions 659-679 (EADEEELARRREARKQEQANN) form a coiled coil. The residue at position 688 (S688) is a Phosphoserine. Positions 725 to 756 (VKLEEERRHRQKLEKDKRRKKRKEKEKKGKRR) form a coiled coil. Basic and acidic residues predominate over residues 726-740 (KLEEERRHRQKLEKD). A compositionally biased stretch (basic residues) spans 741–758 (KRRKKRKEKEKKGKRRHS). Phosphoserine is present on residues S758 and S759. Position 762 is a phosphothreonine (T762). S764, A785, S788, K828, and S829 each carry phosphoserine. The span at 777-794 (VTEEMPENALPSDEDDKD) shows a compositional bias: acidic residues. Over residues 795–839 (PNDPYRALDIDLDKPLADSEKLPIQKHRNTETSKSPEKDVPMVEK) the composition is skewed to basic and acidic residues. Composition is skewed to basic residues over residues 840-853 (KSKK…KHKE) and 863-879 (EKEK…KHRK). Residues 845–869 (KKKEKKHKEKERDKEKKKEKEKKKS) are a coiled coil. V931 bears the Phosphoserine mark.

The protein belongs to the adaptor complexes large subunit family. AP-3 associates with the BLOC-1 complex. Adaptor protein complex 3 (AP-3) is a heterotetramer composed of two large adaptins (delta-type subunit AP3D1 and beta-type subunit AP3B1 or AP3B2), a medium adaptin (mu-type subunit AP3M1 or AP3M2) and a small adaptin (sigma-type subunit APS1 or AP3S2). Interacts with SLC30A2. Interacts with CLN3 (via dileucine motif); this interaction facilitates lysosomal targeting. Present in all adult tissues examined with the highest levels in skeletal muscle, heart, pancreas and testis.

It localises to the cytoplasm. It is found in the golgi apparatus membrane. Functionally, part of the AP-3 complex, an adaptor-related complex which is not clathrin-associated. The complex is associated with the Golgi region as well as more peripheral structures. It facilitates the budding of vesicles from the Golgi membrane and may be directly involved in trafficking to lysosomes. Involved in process of CD8+ T-cell and NK cell degranulation. In concert with the BLOC-1 complex, AP-3 is required to target cargos into vesicles assembled at cell bodies for delivery into neurites and nerve terminals. The chain is AP-3 complex subunit delta-1 (AP3D1) from Homo sapiens (Human).